The primary structure comprises 239 residues: Ribonuclease HII (239 aa).

In terms of domain architecture, RNase H type-2 spans glycine 30–glycine 221. Positions 36, 37, and 130 each coordinate a divalent metal cation. The segment at threonine 217–glycine 239 is disordered. Residues alanine 225–glycine 239 show a composition bias toward basic and acidic residues.

Belongs to the RNase HII family. Mn(2+) is required as a cofactor. It depends on Mg(2+) as a cofactor.

It is found in the cytoplasm. The catalysed reaction is Endonucleolytic cleavage to 5'-phosphomonoester.. In terms of biological role, endonuclease that specifically degrades the RNA of RNA-DNA hybrids. The sequence is that of Ribonuclease HII from Mycobacterium ulcerans (strain Agy99).